The sequence spans 790 residues: Choline transporter-like 2 (790 aa).

The chain crosses the membrane as a helical span at residues 47-67; it reads PCLFLFVTFLCAWGYVAYYAV. 2 N-linked (GlcNAc...) asparagine glycosylation sites follow: asparagine 102 and asparagine 259. Helical transmembrane passes span 288–308, 319–339, and 344–364; these read IITP…FQMI, ILVF…MLRW, and LVWI…YYSF. Residue asparagine 384 is glycosylated (N-linked (GlcNAc...) asparagine). Helical transmembrane passes span 400-420 and 449-469; these read LWIL…VLVL and LVPW…LLFL. N-linked (GlcNAc...) asparagine glycosylation is present at asparagine 483. A run of 4 helical transmembrane segments spans residues 545 to 565, 592 to 612, 691 to 711, and 728 to 748; these read VIGF…VLAF, VYYH…CKII, VTGF…AAVT, and FVPA…FFSV.

Belongs to the CTL (choline transporter-like) family.

The protein resides in the membrane. The polypeptide is Choline transporter-like 2 (Anopheles gambiae (African malaria mosquito)).